A 976-amino-acid polypeptide reads, in one-letter code: Ephrin type-A receptor 1 (976 aa).

An N-terminal signal peptide occupies residues 1-25 (MERRWPLGLGLVLLLCAPLPPGARA). Residues 26–547 (KEVTLMDTSK…PVSRGLTGGE (522 aa)) are Extracellular-facing. The 183-residue stretch at 27–209 (EVTLMDTSKA…FYQRCPETLN (183 aa)) folds into the Eph LBD domain. 2 consecutive Fibronectin type-III domains span residues 332-445 (PPSA…MGHA) and 447-538 (SLSG…TSPP). Asparagine 414 carries an N-linked (GlcNAc...) asparagine glycan. A helical membrane pass occupies residues 548–568 (IVAVIFGLLLGAALLLGILVF). The Cytoplasmic portion of the chain corresponds to 569–976 (RSRRAQRQRQ…ILCSIQGFKD (408 aa)). Tyrosine 599 and tyrosine 605 each carry phosphotyrosine; by autocatalysis. Residues 624–884 (LMVDTVIGEG…KLQAHLEQLL (261 aa)) form the Protein kinase domain. ATP contacts are provided by residues 630–638 (IGEGEFGEV) and lysine 656. The active-site Proton acceptor is aspartate 749. Residue tyrosine 781 is modified to Phosphotyrosine; by autocatalysis. Serine 906 and serine 910 each carry phosphoserine. Residues 913-976 (IPYRTVSEWL…ILCSIQGFKD (64 aa)) enclose the SAM domain. Residue tyrosine 930 is modified to Phosphotyrosine; by autocatalysis. The short motif at 974–976 (FKD) is the PDZ-binding element.

The protein belongs to the protein kinase superfamily. Tyr protein kinase family. Ephrin receptor subfamily. As to quaternary structure, homodimer. Forms a signaling complex with LCK; PTK2B/PYK2 and PI3-kinase upon activation by EFNA1; regulates T-lymphocytes migration. Interacts (via SAM domain) with ILK (via ANK repeats); stimulated by EFNA1 but independent of the kinase activity of EPHA1. Interacts (kinase activity-dependent) with PTK2/FAK1. In terms of processing, phosphorylated. Autophosphorylation is stimulated by its ligand EFNA1. Ubiquitinated. In terms of tissue distribution, overexpressed in several carcinomas.

Its subcellular location is the cell membrane. The catalysed reaction is L-tyrosyl-[protein] + ATP = O-phospho-L-tyrosyl-[protein] + ADP + H(+). Its function is as follows. Receptor tyrosine kinase which binds promiscuously membrane-bound ephrin-A family ligands residing on adjacent cells, leading to contact-dependent bidirectional signaling into neighboring cells. The signaling pathway downstream of the receptor is referred to as forward signaling while the signaling pathway downstream of the ephrin ligand is referred to as reverse signaling. Binds with a low affinity EFNA3 and EFNA4 and with a high affinity to EFNA1 which most probably constitutes its cognate/functional ligand. Upon activation by EFNA1 induces cell attachment to the extracellular matrix inhibiting cell spreading and motility through regulation of ILK and downstream RHOA and RAC. Also plays a role in angiogenesis and regulates cell proliferation. May play a role in apoptosis. The protein is Ephrin type-A receptor 1 (EPHA1) of Homo sapiens (Human).